We begin with the raw amino-acid sequence, 593 residues long: A-type ATP synthase subunit A (593 aa).

236–243 (GPFGSGKT) serves as a coordination point for ATP.

It belongs to the ATPase alpha/beta chains family. As to quaternary structure, has multiple subunits with at least A(3), B(3), C, D, E, F, H, I and proteolipid K(x).

The protein resides in the cell membrane. It catalyses the reaction ATP + H2O + 4 H(+)(in) = ADP + phosphate + 5 H(+)(out). Its function is as follows. Produces ATP from ADP in the presence of a proton gradient across the membrane. The archaeal alpha chain is a catalytic subunit. Functionally, component of the A-type ATP synthase that produces ATP from ADP in the presence of a proton gradient across the membrane. The A chain is the catalytic subunit. The chain is A-type ATP synthase subunit A from Pyrobaculum aerophilum (strain ATCC 51768 / DSM 7523 / JCM 9630 / CIP 104966 / NBRC 100827 / IM2).